Here is a 208-residue protein sequence, read N- to C-terminus: Holliday junction resolvase RecU (208 aa).

Thr87, Asp89, Glu102, and Gln121 together coordinate Mg(2+).

Belongs to the RecU family. Mg(2+) is required as a cofactor.

It is found in the cytoplasm. It carries out the reaction Endonucleolytic cleavage at a junction such as a reciprocal single-stranded crossover between two homologous DNA duplexes (Holliday junction).. Endonuclease that resolves Holliday junction intermediates in genetic recombination. Cleaves mobile four-strand junctions by introducing symmetrical nicks in paired strands. Promotes annealing of linear ssDNA with homologous dsDNA. Required for DNA repair, homologous recombination and chromosome segregation. This chain is Holliday junction resolvase RecU, found in Staphylococcus aureus (strain MRSA252).